Reading from the N-terminus, the 66-residue chain is Toxin Tppa1 (66 aa).

Positions 1 to 63 (KDGYLVGNDG…TWSRSTNRCG (63 aa)) constitute an LCN-type CS-alpha/beta domain. 4 cysteine pairs are disulfide-bonded: C11–C62, C15–C37, C23–C43, and C27–C45.

It belongs to the long (4 C-C) scorpion toxin superfamily. Sodium channel inhibitor family. Beta subfamily. As to expression, expressed by the venom gland.

The protein resides in the secreted. Its function is as follows. Beta toxins bind voltage-independently at site-4 of sodium channels (Nav) and shift the voltage of activation toward more negative potentials thereby affecting sodium channel activation and promoting spontaneous and repetitive firing. The sequence is that of Toxin Tppa1 from Tityus pachyurus (Colombian scorpion).